Consider the following 204-residue polypeptide: Large ribosomal subunit protein uL4 (204 aa).

Positions Thr-49–Ser-75 are disordered.

The protein belongs to the universal ribosomal protein uL4 family. As to quaternary structure, part of the 50S ribosomal subunit.

In terms of biological role, one of the primary rRNA binding proteins, this protein initially binds near the 5'-end of the 23S rRNA. It is important during the early stages of 50S assembly. It makes multiple contacts with different domains of the 23S rRNA in the assembled 50S subunit and ribosome. Its function is as follows. Forms part of the polypeptide exit tunnel. This is Large ribosomal subunit protein uL4 from Campylobacter jejuni subsp. doylei (strain ATCC BAA-1458 / RM4099 / 269.97).